The following is a 296-amino-acid chain: MSRDLTAVQAKAATLVEALPWLATFHGRTVVIKYGGHAMIDPGLAASFAADVVFLRYAGLRPVVVHGGGPQIDAMLRRLGIEPVFAAGLRVTTPETMDVVRMVLVGQVQREVVGLLNAHGPFAVGVSGEDGRLFTAVRRSAVVDGHDVDLGLVGEITEVNPTVIQSLLDDGHVPVVSSIAGGVDSDGRRCVYNVNADTAAAALAVALGAEKLVVLTDVEGLFADWPNTDEVISRLTADELEKLLPGLAAGMIPKMEACLRAVRGGVAAAHVLDGRVPHAILLEIFTDEGVGTMVVP.

Residues 68–69, Arg-90, and Asn-193 contribute to the substrate site; that span reads GG.

The protein belongs to the acetylglutamate kinase family. ArgB subfamily.

The protein resides in the cytoplasm. It carries out the reaction N-acetyl-L-glutamate + ATP = N-acetyl-L-glutamyl 5-phosphate + ADP. It functions in the pathway amino-acid biosynthesis; L-arginine biosynthesis; N(2)-acetyl-L-ornithine from L-glutamate: step 2/4. In terms of biological role, catalyzes the ATP-dependent phosphorylation of N-acetyl-L-glutamate. This Acidothermus cellulolyticus (strain ATCC 43068 / DSM 8971 / 11B) protein is Acetylglutamate kinase.